Here is a 351-residue protein sequence, read N- to C-terminus: Calcium homeostasis modulator 1 (351 aa).

Residues Met1–Asn20 lie on the Cytoplasmic side of the membrane. A central pore region spans residues Gln9 to Ser36. The chain crosses the membrane as a helical span at residues Gly21–Ser36. Topologically, residues Phe37–Asn48 are extracellular. 2 disulfides stabilise this stretch: Cys41–Cys126 and Cys43–Cys160. A helical membrane pass occupies residues Tyr49–Asn71. The phospholipid-binding stretch occupies residues Trp62–Val69. The Cytoplasmic portion of the chain corresponds to Asn72 to Met98. Residues Leu99–Phe124 form a helical membrane-spanning segment. Cys100 carries S-palmitoyl cysteine lipidation. Residues Gln104 to Val116 form a phospholipid-binding region. Topologically, residues Leu125–Ile177 are extracellular. Residue Asn139 is glycosylated (N-linked (GlcNAc...) asparagine). The chain crosses the membrane as a helical span at residues Lys178–Arg203. Positions Leu189–Ile199 are phospholipid-binding. Over Pro204–Val351 the chain is Cytoplasmic. Cys205 is lipidated: S-palmitoyl cysteine. Residues His259–Lys281 form a disordered region. The segment covering Ser263–Lys281 has biased composition (basic and acidic residues).

Belongs to the CALHM family. In terms of assembly, oligomerizes to form hexamers and octamers. Does not form gap junctions. Associates with CALHM3 as a pore-forming subunit in a hetero-hexameric channel complex. N-glycosylated. In terms of processing, palmitoylated.

The protein resides in the cell membrane. Its subcellular location is the endoplasmic reticulum membrane. It is found in the basolateral cell membrane. The catalysed reaction is ATP(in) = ATP(out). It carries out the reaction Ca(2+)(in) = Ca(2+)(out). The enzyme catalyses Mg(2+)(in) = Mg(2+)(out). It catalyses the reaction Na(+)(in) = Na(+)(out). The catalysed reaction is K(+)(in) = K(+)(out). It carries out the reaction Li(+)(in) = Li(+)(out). The enzyme catalyses Rb(+)(in) = Rb(+)(out). It catalyses the reaction Cs(+)(in) = Cs(+)(out). The catalysed reaction is chloride(in) = chloride(out). Its activity is regulated as follows. Activated in response to membrane depolarization and low extracellular Ca(2+) concentration. Inhibited by ruthenium red. Its function is as follows. Pore-forming subunit of a voltage-gated ion channel. Has poor ion selectivity and forms a wide pore that mediates permeation of small ions including Ca(2+), Na(+), K(+) and Cl(-), as well as larger ions such as ATP(4-). The chain is Calcium homeostasis modulator 1 from Oryzias latipes (Japanese rice fish).